The sequence spans 102 residues: Small ribosomal subunit protein uS10 (102 aa).

Belongs to the universal ribosomal protein uS10 family. As to quaternary structure, part of the 30S ribosomal subunit.

In terms of biological role, involved in the binding of tRNA to the ribosomes. The polypeptide is Small ribosomal subunit protein uS10 (Brevibacillus brevis (strain 47 / JCM 6285 / NBRC 100599)).